Consider the following 265-residue polypeptide: Type III pantothenate kinase (265 aa).

Position 6-13 (6-13 (DVGNTHTV)) interacts with ATP. 112–115 (GADR) is a substrate binding site. The active-site Proton acceptor is the aspartate 114. Aspartate 134 contributes to the K(+) binding site. Position 137 (threonine 137) interacts with ATP. Threonine 189 contacts substrate.

This sequence belongs to the type III pantothenate kinase family. In terms of assembly, homodimer. NH4(+) is required as a cofactor. Requires K(+) as cofactor.

It is found in the cytoplasm. It carries out the reaction (R)-pantothenate + ATP = (R)-4'-phosphopantothenate + ADP + H(+). Its pathway is cofactor biosynthesis; coenzyme A biosynthesis; CoA from (R)-pantothenate: step 1/5. Catalyzes the phosphorylation of pantothenate (Pan), the first step in CoA biosynthesis. This is Type III pantothenate kinase from Streptomyces griseus subsp. griseus (strain JCM 4626 / CBS 651.72 / NBRC 13350 / KCC S-0626 / ISP 5235).